A 229-amino-acid chain; its full sequence is Large ribosomal subunit protein uL1 (229 aa).

The protein belongs to the universal ribosomal protein uL1 family. As to quaternary structure, part of the 50S ribosomal subunit.

Functionally, binds directly to 23S rRNA. The L1 stalk is quite mobile in the ribosome, and is involved in E site tRNA release. Its function is as follows. Protein L1 is also a translational repressor protein, it controls the translation of the L11 operon by binding to its mRNA. This chain is Large ribosomal subunit protein uL1, found in Streptococcus pneumoniae (strain ATCC 700669 / Spain 23F-1).